The following is a 533-amino-acid chain: Glucose-6-phosphate isomerase (533 aa).

The Proton donor role is filled by Glu-341. Residues His-372 and Lys-501 contribute to the active site.

It belongs to the GPI family.

Its subcellular location is the cytoplasm. The catalysed reaction is alpha-D-glucose 6-phosphate = beta-D-fructose 6-phosphate. Its pathway is carbohydrate biosynthesis; gluconeogenesis. The protein operates within carbohydrate degradation; glycolysis; D-glyceraldehyde 3-phosphate and glycerone phosphate from D-glucose: step 2/4. Functionally, catalyzes the reversible isomerization of glucose-6-phosphate to fructose-6-phosphate. In Cereibacter sphaeroides (strain ATCC 17023 / DSM 158 / JCM 6121 / CCUG 31486 / LMG 2827 / NBRC 12203 / NCIMB 8253 / ATH 2.4.1.) (Rhodobacter sphaeroides), this protein is Glucose-6-phosphate isomerase.